Consider the following 303-residue polypeptide: Nucleotide-binding protein Dvul_1502 (303 aa).

23–30 (GLSGAGKS) is a binding site for ATP. 75-78 (DLRE) is a GTP binding site.

Belongs to the RapZ-like family.

Its function is as follows. Displays ATPase and GTPase activities. This Nitratidesulfovibrio vulgaris (strain DP4) (Desulfovibrio vulgaris) protein is Nucleotide-binding protein Dvul_1502.